Reading from the N-terminus, the 417-residue chain is Interferon regulatory factor 3 (417 aa).

Thr-3 is modified (phosphothreonine). A DNA-binding region (IRF tryptophan pentad repeat) is located at residues Lys-5–Asn-111. At Ser-14 the chain carries Phosphoserine. The residue at position 75 (Thr-75) is a Phosphothreonine. Ser-97 and Ser-123 each carry phosphoserine. Disordered stretches follow at residues Asn-111–Thr-134 and Asp-147–Pro-170. The interval Glu-140–Phe-417 is mediates interaction with ZDHHC11. A Phosphoserine modification is found at Ser-184. A Glycyl lysine isopeptide (Lys-Gly) (interchain with G-Cter in ISG15) cross-link involves residue Lys-189. Residues Glu-196–Lys-356 form an interaction with HERC5 region. Thr-249 carries the post-translational modification Phosphothreonine. Residues Cys-263 and Cys-285 are joined by a disulfide bond. Residues Lys-356 and Lys-362 each participate in a glycyl lysine isopeptide (Lys-Gly) (interchain with G-Cter in ISG15) cross-link. The residue at position 362 (Lys-362) is an N6-acetyllysine. Ser-381 is subject to Phosphoserine. Diphosphoserine is present on Ser-382. Ser-382 carries the phosphoserine; by TBK1 modification. Ser-392 is subject to Phosphoserine; by IKKE. At Ser-394 the chain carries Phosphoserine. Thr-400 is modified (phosphothreonine).

It belongs to the IRF family. In terms of assembly, monomer. Homodimer; phosphorylation-induced. Interacts (when phosphorylated) with CREBBP. Interacts with MAVS (via phosphorylated pLxIS motif). Interacts with TICAM1 (via phosphorylated pLxIS motif). Interacts with STING1 (via phosphorylated pLxIS motif). Interacts with IKBKE and TBK1. Interacts with TICAM2. Interacts with RBCK1. Interacts with HERC5. Interacts with DDX3X; the interaction allows the phosphorylation and activation of IRF3 by IKBKE. Interacts with TRIM21 and ULK1, in the presence of TRIM21; this interaction leads to IRF3 degradation by autophagy. Interacts with RIOK3; RIOK3 probably mediates the interaction of TBK1 with IRF3. Interacts with ILRUN; the interaction inhibits IRF3 binding to its DNA consensus sequence. Interacts with LYAR; this interaction impairs IRF3 DNA-binding activity. Interacts with TRAF3. Interacts with ZDHHC11; ZDHHC11 recruits IRF3 to STING1 upon DNA virus infection and thereby promotes IRF3 activation. Interacts with HSP90AA1; the interaction mediates IRF3 association with TOMM70. Interacts with BCL2; the interaction decreases upon Sendai virus infection. Interacts with BAX; the interaction is direct, increases upon virus infection and mediates the formation of the apoptosis complex TOMM70:HSP90AA1:IRF3:BAX. Interacts with DDX56. Interacts with NBR1. Post-translationally, constitutively phosphorylated on many Ser/Thr residues. Activated following phosphorylation by TBK1 and IKBKE. Innate adapter proteins, such as MAVS, STING1 or TICAM1, are first activated by viral RNA, cytosolic DNA, and bacterial lipopolysaccharide (LPS), respectively, leading to activation of the kinases TBK1 and IKBKE. These kinases then phosphorylate the adapter proteins on the pLxIS motif, leading to recruitment of IRF3, thereby licensing IRF3 for phosphorylation by TBK1. Phosphorylation at Ser-382 is followed by pyrophosphorylation at the same residue, promoting phosphorylation at Ser-392. Phosphorylated IRF3 dissociates from the adapter proteins, dimerizes, and then enters the nucleus to induce IFNs. Pyrophosphorylated by UAP1 following phosphorylation at Ser-382 by TBK1. Pyrophosphorylation promotes subsequent phosphorylation at Ser-392, leading to homodimerization of IRF3. In terms of processing, acetylation at Lys-362 by KAT8 inhibits recruimtent to promoters and transcription factor activity. Acetylation by KAT8 is promoted by phosphorylation at Ser-392. Post-translationally, ubiquitinated; ubiquitination involves RBCK1 leading to proteasomal degradation. Polyubiquitinated; ubiquitination involves TRIM21 leading to proteasomal degradation. Ubiquitinated by UBE3C, leading to its degradation. Deubiquitinated by USP5 on both 'Lys-48'-linked unanchored and 'Lys-63'-linked anchored polyubiquitin, leading to inhibition of anti-RNA viral innate immunity. ISGylated by HERC5 resulting in sustained IRF3 activation and in the inhibition of IRF3 ubiquitination by disrupting PIN1 binding. The phosphorylation state of IRF3 does not alter ISGylation. In terms of processing, proteolytically cleaved by apoptotic caspases during apoptosis, leading to its inactivation. Cleavage by CASP3 during virus-induced apoptosis inactivates it, preventing cytokine overproduction.

The protein localises to the cytoplasm. The protein resides in the nucleus. Its subcellular location is the mitochondrion. Its activity is regulated as follows. In the absence of viral infection, maintained as a monomer in an autoinhibited state. Phosphorylation by TBK1 and IKBKE disrupts this autoinhibition leading to the liberation of the DNA-binding and dimerization activities and its nuclear localization where it can activate type I IFN and ISG genes. Phosphorylation and activation follow the following steps: innate adapter proteins, such as MAVS, STING1 or TICAM1, are first activated by viral RNA, cytosolic DNA and bacterial lipopolysaccharide (LPS), respectively, leading to activation of the kinases TBK1 and IKBKE. These kinases then phosphorylate the adapter proteins on their pLxIS motif, leading to recruitment of IRF3, thereby licensing IRF3 for phosphorylation by TBK1. Phosphorylated IRF3 dissociates from the adapter proteins, dimerizes, and then enters the nucleus to induce IFNs. Functionally, key transcriptional regulator of type I interferon (IFN)-dependent immune responses which plays a critical role in the innate immune response against DNA and RNA viruses. Regulates the transcription of type I IFN genes (IFN-alpha and IFN-beta) and IFN-stimulated genes (ISG) by binding to an interferon-stimulated response element (ISRE) in their promoters. Acts as a more potent activator of the IFN-beta (IFNB) gene than the IFN-alpha (IFNA) gene and plays a critical role in both the early and late phases of the IFNA/B gene induction. Found in an inactive form in the cytoplasm of uninfected cells and following viral infection, double-stranded RNA (dsRNA), or toll-like receptor (TLR) signaling, is phosphorylated by IKBKE and TBK1 kinases. This induces a conformational change, leading to its dimerization and nuclear localization and association with CREB binding protein (CREBBP) to form dsRNA-activated factor 1 (DRAF1), a complex which activates the transcription of the type I IFN and ISG genes. Can activate distinct gene expression programs in macrophages and can induce significant apoptosis in primary macrophages. The polypeptide is Interferon regulatory factor 3 (IRF3) (Bos taurus (Bovine)).